The primary structure comprises 230 residues: Octanoyltransferase (230 aa).

The BPL/LPL catalytic domain maps to 31–230 (PETPDELWIC…GDKLTRYLAP (200 aa)). Residues 70–77 (RGGQVTYH), 163–165 (ALG), and 176–178 (GVA) each bind substrate. Residue C194 is the Acyl-thioester intermediate of the active site.

This sequence belongs to the LipB family.

The protein localises to the cytoplasm. The catalysed reaction is octanoyl-[ACP] + L-lysyl-[protein] = N(6)-octanoyl-L-lysyl-[protein] + holo-[ACP] + H(+). It functions in the pathway protein modification; protein lipoylation via endogenous pathway; protein N(6)-(lipoyl)lysine from octanoyl-[acyl-carrier-protein]: step 1/2. In terms of biological role, catalyzes the transfer of endogenously produced octanoic acid from octanoyl-acyl-carrier-protein onto the lipoyl domains of lipoate-dependent enzymes. Lipoyl-ACP can also act as a substrate although octanoyl-ACP is likely to be the physiological substrate. This Albidiferax ferrireducens (strain ATCC BAA-621 / DSM 15236 / T118) (Rhodoferax ferrireducens) protein is Octanoyltransferase.